Reading from the N-terminus, the 123-residue chain is Small ribosomal subunit protein uS13 (123 aa).

Residues 95–123 form a disordered region; sequence GLPVRGQKTKTNARTRKGPKRTVGRKKKK. Residues 101–123 show a composition bias toward basic residues; it reads QKTKTNARTRKGPKRTVGRKKKK.

It belongs to the universal ribosomal protein uS13 family. In terms of assembly, part of the 30S ribosomal subunit. Forms a loose heterodimer with protein S19. Forms two bridges to the 50S subunit in the 70S ribosome.

Its function is as follows. Located at the top of the head of the 30S subunit, it contacts several helices of the 16S rRNA. In the 70S ribosome it contacts the 23S rRNA (bridge B1a) and protein L5 of the 50S subunit (bridge B1b), connecting the 2 subunits; these bridges are implicated in subunit movement. Contacts the tRNAs in the A and P-sites. The chain is Small ribosomal subunit protein uS13 from Alkaliphilus metalliredigens (strain QYMF).